The chain runs to 262 residues: Phenylalanine-4-hydroxylase (262 aa).

Residues His121, His126, and Glu166 each coordinate Fe cation.

Belongs to the biopterin-dependent aromatic amino acid hydroxylase family. As to quaternary structure, monomer. Fe(2+) is required as a cofactor.

It catalyses the reaction (6R)-L-erythro-5,6,7,8-tetrahydrobiopterin + L-phenylalanine + O2 = (4aS,6R)-4a-hydroxy-L-erythro-5,6,7,8-tetrahydrobiopterin + L-tyrosine. The protein operates within amino-acid degradation; L-phenylalanine degradation; acetoacetate and fumarate from L-phenylalanine: step 1/6. The chain is Phenylalanine-4-hydroxylase (phhA) from Pseudomonas aeruginosa (strain ATCC 15692 / DSM 22644 / CIP 104116 / JCM 14847 / LMG 12228 / 1C / PRS 101 / PAO1).